Here is a 537-residue protein sequence, read N- to C-terminus: Chaperonin GroEL 3 (537 aa).

ATP contacts are provided by residues 30-33 (TLGP), 87-91 (DGTTT), glycine 414, 480-482 (DAL), and aspartate 496.

It belongs to the chaperonin (HSP60) family. Forms a cylinder of 14 subunits composed of two heptameric rings stacked back-to-back. Interacts with the co-chaperonin GroES.

Its subcellular location is the cytoplasm. It carries out the reaction ATP + H2O + a folded polypeptide = ADP + phosphate + an unfolded polypeptide.. Together with its co-chaperonin GroES, plays an essential role in assisting protein folding. The GroEL-GroES system forms a nano-cage that allows encapsulation of the non-native substrate proteins and provides a physical environment optimized to promote and accelerate protein folding. The chain is Chaperonin GroEL 3 from Acaryochloris marina (strain MBIC 11017).